Reading from the N-terminus, the 277-residue chain is MKKAPAGSFPAKPTIAPERPILVFDSGIGGLTVLREARVVMPDRRFVYIADDAGFPYGNWEEEALKRRIIELFGEFIANYDPEIAVIACNTASTLVLEDLRRAYPSVPFVGTVPAIKPAAERTSSGLVSVLATPGTVKRAYTRDLIQSFASRCHVRLVGADGLAAIAEAHIRGESFDEALVMAQIAPCFIEKDGKRTDIVVLACTHYPFLVNVLRRLAPWPVDWLDPAEAIARRMKSLLPARSDDDEFHSQDDLAFFTSRKPDYAIRRLMQGFGLRF.

Substrate-binding positions include 25–26 (DS) and 57–58 (YG). C89 functions as the Proton donor/acceptor in the catalytic mechanism. Residue 90–91 (NT) participates in substrate binding. The Proton donor/acceptor role is filled by C204. 205 to 206 (TH) contributes to the substrate binding site.

This sequence belongs to the aspartate/glutamate racemases family.

It catalyses the reaction L-glutamate = D-glutamate. The protein operates within cell wall biogenesis; peptidoglycan biosynthesis. Functionally, provides the (R)-glutamate required for cell wall biosynthesis. This is Glutamate racemase from Brucella abortus (strain 2308).